Reading from the N-terminus, the 492-residue chain is Homoserine O-acetyltransferase (492 aa).

Residues 47-354 form the AB hydrolase-1 domain; it reads NVILVCHALT…NYGHDAFLLE (308 aa). S152 serves as the catalytic Nucleophile. A substrate-binding site is contributed by R221. Residues D315 and H348 contribute to the active site. Position 349 (D349) interacts with substrate. 2 CBS domains span residues 375–432 and 436–492; these read MKLD…FTTL and LTKN…HRCT.

This sequence belongs to the AB hydrolase superfamily. MetX family. In terms of assembly, homodimer.

Its subcellular location is the cytoplasm. It carries out the reaction L-homoserine + acetyl-CoA = O-acetyl-L-homoserine + CoA. The protein operates within amino-acid biosynthesis; L-methionine biosynthesis via de novo pathway; O-acetyl-L-homoserine from L-homoserine: step 1/1. Its function is as follows. Transfers an acetyl group from acetyl-CoA to L-homoserine, forming acetyl-L-homoserine. The polypeptide is Homoserine O-acetyltransferase (Methanosalsum zhilinae (strain DSM 4017 / NBRC 107636 / OCM 62 / WeN5) (Methanohalophilus zhilinae)).